The chain runs to 349 residues: UDP-N-acetylenolpyruvoylglucosamine reductase (349 aa).

Residues Gly-25–Gln-197 enclose the FAD-binding PCMH-type domain. The active site involves Arg-173. The Proton donor role is filled by Ser-249. Residue Glu-345 is part of the active site.

The protein belongs to the MurB family. Requires FAD as cofactor.

The protein localises to the cytoplasm. It catalyses the reaction UDP-N-acetyl-alpha-D-muramate + NADP(+) = UDP-N-acetyl-3-O-(1-carboxyvinyl)-alpha-D-glucosamine + NADPH + H(+). Its pathway is cell wall biogenesis; peptidoglycan biosynthesis. Cell wall formation. The sequence is that of UDP-N-acetylenolpyruvoylglucosamine reductase from Burkholderia orbicola (strain MC0-3).